Reading from the N-terminus, the 185-residue chain is TATA-box-binding protein (185 aa).

2 consecutive repeat copies span residues 8-84 and 99-175.

The protein belongs to the TBP family.

General factor that plays a role in the activation of archaeal genes transcribed by RNA polymerase. Binds specifically to the TATA box promoter element which lies close to the position of transcription initiation. This is TATA-box-binding protein from Thermococcus sibiricus (strain DSM 12597 / MM 739).